The sequence spans 174 residues: uncharacterized protein (174 aa).

This sequence belongs to the IIV-6 196R family.

This is an uncharacterized protein from Acheta domesticus (House cricket).